The sequence spans 464 residues: Asparagine--tRNA ligase (464 aa).

This sequence belongs to the class-II aminoacyl-tRNA synthetase family. Homodimer.

The protein resides in the cytoplasm. It catalyses the reaction tRNA(Asn) + L-asparagine + ATP = L-asparaginyl-tRNA(Asn) + AMP + diphosphate + H(+). The chain is Asparagine--tRNA ligase from Clostridium botulinum (strain Alaska E43 / Type E3).